The following is a 181-amino-acid chain: Small ribosomal subunit protein cS23 (181 aa).

Residues 1 to 40 are disordered; the sequence is MLPMSVHPATTPALASRPRVSLPRPSTPSSSSSLVHLKSR. Positions 14–36 are enriched in low complexity; it reads LASRPRVSLPRPSTPSSSSSLVH.

Belongs to the chloroplast-specific ribosomal protein cS23 family. In terms of assembly, part of the 30S ribosomal subunit.

It is found in the plastid. The protein localises to the chloroplast. Functionally, component of the chloroplast ribosome (chloro-ribosome), a dedicated translation machinery responsible for the synthesis of chloroplast genome-encoded proteins, including proteins of the transcription and translation machinery and components of the photosynthetic apparatus. The polypeptide is Small ribosomal subunit protein cS23 (PSRP3) (Hordeum vulgare (Barley)).